The chain runs to 212 residues: Ribonuclease HII (212 aa).

Residues 1–205 (MTICGVDEAG…VQDILDRASQ (205 aa)) enclose the RNase H type-2 domain. A divalent metal cation-binding residues include Asp-7, Glu-8, and Asp-100.

It belongs to the RNase HII family. Requires Mn(2+) as cofactor. The cofactor is Mg(2+).

The protein resides in the cytoplasm. The catalysed reaction is Endonucleolytic cleavage to 5'-phosphomonoester.. Functionally, endonuclease that specifically degrades the RNA of RNA-DNA hybrids. The chain is Ribonuclease HII from Methanocorpusculum labreanum (strain ATCC 43576 / DSM 4855 / Z).